The chain runs to 272 residues: uncharacterized protein (272 aa).

Residues aspartate 71 and glutamate 163 contribute to the active site.

It belongs to the glycosyl hydrolase 25 family.

This is an uncharacterized protein from Escherichia coli (strain K12).